Reading from the N-terminus, the 300-residue chain is L-arabinolactonase (300 aa).

A divalent metal cation-binding residues include E22, N156, and D205.

The protein belongs to the SMP-30/CGR1 family. It depends on a divalent metal cation as a cofactor.

It carries out the reaction L-arabinono-1,4-lactone + H2O = L-arabinonate + H(+). Functionally, catalyzes the cleavage of L-arabino-gamma-lactone to L-arabonate. Is involved in a degradation pathway of L-arabinose that allows A.brasilense to grow on L-arabinose as a sole carbon source. Can also use D-galactono-1,4-lactone as substrate in vitro; however, the enzyme is probably not involved in the metabolism of D-galactose in vivo. The protein is L-arabinolactonase (araB) of Azospirillum brasilense.